The chain runs to 488 residues: BTB/POZ domain-containing protein 1 (488 aa).

Positions 1-19 are enriched in low complexity; that stretch reads MASLGSAAAGEPATGAEAE. The interval 1 to 42 is disordered; sequence MASLGSAAAGEPATGAEAEPGPPAPPPPPPPPPAPSPSALGP. Positions 20 to 36 are enriched in pro residues; sequence PGPPAPPPPPPPPPAPS. Residues 75–151 form the BTB domain; the sequence is SDVRFVLGKG…LYSDEVQIGP (77 aa). At Arg-85 the chain carries Omega-N-methylarginine. The region spanning 190 to 290 is the BACK domain; that stretch reads LTQARLFDEP…IRFPLMTIEE (101 aa).

Interacts (via C-terminus) with TOP1. Interacts with TRIM5 isoform Delta. Interacts with CUL3. Strongly expressed in heart and skeletal muscle. Weakly expressed in myoblast C2C12 cells, but strongly up-regulated upon their differentiation into myotubes.

Its subcellular location is the cytoplasm. It participates in protein modification; protein ubiquitination. In terms of biological role, probable substrate-specific adapter of an E3 ubiquitin-protein ligase complex which mediates the ubiquitination and subsequent proteasomal degradation of target proteins. Seems to regulate expression levels and/or subnuclear distribution of TOP1, via an unknown mechanism. May play a role in mesenchymal differentiation where it promotes myogenic differentiation and suppresses adipogenesis. The protein is BTB/POZ domain-containing protein 1 (Btbd1) of Mus musculus (Mouse).